We begin with the raw amino-acid sequence, 551 residues long: Glucose-6-phosphate isomerase (551 aa).

Glu356 acts as the Proton donor in catalysis. Active-site residues include His387 and Lys515.

This sequence belongs to the GPI family.

Its subcellular location is the cytoplasm. It carries out the reaction alpha-D-glucose 6-phosphate = beta-D-fructose 6-phosphate. The protein operates within carbohydrate biosynthesis; gluconeogenesis. It participates in carbohydrate degradation; glycolysis; D-glyceraldehyde 3-phosphate and glycerone phosphate from D-glucose: step 2/4. Catalyzes the reversible isomerization of glucose-6-phosphate to fructose-6-phosphate. The polypeptide is Glucose-6-phosphate isomerase (Blochmanniella pennsylvanica (strain BPEN)).